Reading from the N-terminus, the 225-residue chain is 7-cyano-7-deazaguanine synthase (225 aa).

7 to 17 lines the ATP pocket; it reads LSGGMDSTTLL. Zn(2+) is bound by residues Cys183, Cys191, Cys194, and Cys197.

It belongs to the QueC family. Homodimer. The cofactor is Zn(2+).

It catalyses the reaction 7-carboxy-7-deazaguanine + NH4(+) + ATP = 7-cyano-7-deazaguanine + ADP + phosphate + H2O + H(+). It functions in the pathway purine metabolism; 7-cyano-7-deazaguanine biosynthesis. Catalyzes the ATP-dependent conversion of 7-carboxy-7-deazaguanine (CDG) to 7-cyano-7-deazaguanine (preQ(0)). This chain is 7-cyano-7-deazaguanine synthase, found in Caldicellulosiruptor saccharolyticus (strain ATCC 43494 / DSM 8903 / Tp8T 6331).